We begin with the raw amino-acid sequence, 265 residues long: 3-methyl-2-oxobutanoate hydroxymethyltransferase (265 aa).

Mg(2+) contacts are provided by Asp-41 and Asp-80. Residues Asp-41–Ser-42, Asp-80, and Lys-109 each bind 3-methyl-2-oxobutanoate. Glu-111 contributes to the Mg(2+) binding site. Catalysis depends on Glu-178, which acts as the Proton acceptor.

It belongs to the PanB family. Homodecamer; pentamer of dimers. Mg(2+) is required as a cofactor.

It localises to the cytoplasm. It carries out the reaction 3-methyl-2-oxobutanoate + (6R)-5,10-methylene-5,6,7,8-tetrahydrofolate + H2O = 2-dehydropantoate + (6S)-5,6,7,8-tetrahydrofolate. It participates in cofactor biosynthesis; (R)-pantothenate biosynthesis; (R)-pantoate from 3-methyl-2-oxobutanoate: step 1/2. In terms of biological role, catalyzes the reversible reaction in which hydroxymethyl group from 5,10-methylenetetrahydrofolate is transferred onto alpha-ketoisovalerate to form ketopantoate. In Thermosipho africanus (strain TCF52B), this protein is 3-methyl-2-oxobutanoate hydroxymethyltransferase.